We begin with the raw amino-acid sequence, 390 residues long: NADH-quinone oxidoreductase subunit D (390 aa).

Belongs to the complex I 49 kDa subunit family. NDH-1 is composed of 14 different subunits. Subunits NuoB, C, D, E, F, and G constitute the peripheral sector of the complex.

The protein localises to the cell inner membrane. The catalysed reaction is a quinone + NADH + 5 H(+)(in) = a quinol + NAD(+) + 4 H(+)(out). Its function is as follows. NDH-1 shuttles electrons from NADH, via FMN and iron-sulfur (Fe-S) centers, to quinones in the respiratory chain. The immediate electron acceptor for the enzyme in this species is believed to be ubiquinone. Couples the redox reaction to proton translocation (for every two electrons transferred, four hydrogen ions are translocated across the cytoplasmic membrane), and thus conserves the redox energy in a proton gradient. The sequence is that of NADH-quinone oxidoreductase subunit D from Trichlorobacter lovleyi (strain ATCC BAA-1151 / DSM 17278 / SZ) (Geobacter lovleyi).